The chain runs to 243 residues: Probable heat shock transcription factor (243 aa).

Residues 9–102 (INKFIRRLYK…GDNLLPCIQR (94 aa)) mediate DNA binding. Residues 121-164 (QLQDLLQYLNNQNFKLEGEIKSLKDRVDQQDCTINGLVQLLTRI) form an involved in trimerization region.

This sequence belongs to the HSF family. In terms of assembly, homotrimer. Homotrimerization increases the affinity of HSF1 to DNA.

The protein resides in the nucleus. Its function is as follows. DNA-binding transcription factor that specifically binds heat shock promoter elements (HSE) and activates transcription. This is Probable heat shock transcription factor from Vairimorpha ceranae (strain BRL01) (Microsporidian parasite).